The chain runs to 225 residues: Cytidylate kinase (225 aa).

11–19 (GPAAAGKST) serves as a coordination point for ATP.

The protein belongs to the cytidylate kinase family. Type 1 subfamily.

Its subcellular location is the cytoplasm. The catalysed reaction is CMP + ATP = CDP + ADP. It carries out the reaction dCMP + ATP = dCDP + ADP. The polypeptide is Cytidylate kinase (Bacillus pumilus (strain SAFR-032)).